The following is a 103-amino-acid chain: Co-chaperonin GroES (103 aa).

It belongs to the GroES chaperonin family. In terms of assembly, heptamer of 7 subunits arranged in a ring. Interacts with the chaperonin GroEL.

It is found in the cytoplasm. Its function is as follows. Together with the chaperonin GroEL, plays an essential role in assisting protein folding. The GroEL-GroES system forms a nano-cage that allows encapsulation of the non-native substrate proteins and provides a physical environment optimized to promote and accelerate protein folding. GroES binds to the apical surface of the GroEL ring, thereby capping the opening of the GroEL channel. The polypeptide is Co-chaperonin GroES (Prochlorococcus marinus (strain MIT 9215)).